A 601-amino-acid chain; its full sequence is MDTTKNNDEFDISYFLTCSIFGFILWILTEQILKYYNKTNKNNKYNLPKGPSFLKWFINYLFNFYDLKLSNNKEEDNNNNNNKSNNSLSQEELIEDTSENTVLKWFNQLNSDNYSVSFFGRPMIFTRDTTISKYILSSNNIDNYTKPPDSSGVLIRLAQNSILMSEGDQWRYHRSIINQPFSSKNVKLMIPTIITTINKLINHLNNNNNNNNNNNNNNNNNNNNNNNNNNNNNNNNNNNNNNNNNNNNNNNNNNNNNNTIIIDIHSYCTKLTFDIIGKLSIGYDFNSIESSDNDNDNNDDDDISKQFDFILNEMIRPIRRFSSYLPLYNDIKLFKFLNELESIIKGAINSRSLITDNNNNKTYKKNFLLDNLLDDNVKEKDIIGNINTFLLAGHETSANLLTFIFYLLSTHNNVQNDLYNHLIENQKKKINKDNKFTEEDEDYQSIEFLDWVIYETLRLFPPAPMIGRTSKNDDILKSGNNNNNNNNNISIPSETLILISVYAIHRDPKLWKDPNIFNPYRWKNIENINNRSDFIPFSSGGRVCVGQKFSIVEARIIISKLILNFELSFNNLKSKPFKIYQRATLTPKYPVFLNFKKRENK.

Residues 12 to 32 (ISYFLTCSIFGFILWILTEQI) form a helical membrane-spanning segment. The tract at residues 205-253 (NNNNNNNNNNNNNNNNNNNNNNNNNNNNNNNNNNNNNNNNNNNNNNNNN) is disordered. Cys544 lines the heme pocket.

The protein belongs to the cytochrome P450 family. Requires heme as cofactor.

The protein localises to the membrane. The protein is Probable cytochrome P450 525A1 (cyp525A1) of Dictyostelium discoideum (Social amoeba).